A 591-amino-acid polypeptide reads, in one-letter code: Probable metalloprotease ARX1 (591 aa).

Belongs to the peptidase M24 family. As to quaternary structure, component of the nucleoplasmic and cytoplasmic pre-60S ribosomal particles.

The protein resides in the cytoplasm. The protein localises to the nucleus. Functionally, probable metalloprotease involved in proper assembly of pre-ribosomal particles during the biogenesis of the 60S ribosomal subunit. Accompanies the pre-60S particles to the cytoplasm. This chain is Probable metalloprotease ARX1 (ARX1), found in Eremothecium gossypii (strain ATCC 10895 / CBS 109.51 / FGSC 9923 / NRRL Y-1056) (Yeast).